Reading from the N-terminus, the 754-residue chain is 1,4-alpha-glucan branching enzyme GlgB (754 aa).

Catalysis depends on Asp-431, which acts as the Nucleophile. Residue Glu-484 is the Proton donor of the active site.

This sequence belongs to the glycosyl hydrolase 13 family. GlgB subfamily. As to quaternary structure, monomer.

The enzyme catalyses Transfers a segment of a (1-&gt;4)-alpha-D-glucan chain to a primary hydroxy group in a similar glucan chain.. It participates in glycan biosynthesis; glycogen biosynthesis. Its function is as follows. Catalyzes the formation of the alpha-1,6-glucosidic linkages in glycogen by scission of a 1,4-alpha-linked oligosaccharide from growing alpha-1,4-glucan chains and the subsequent attachment of the oligosaccharide to the alpha-1,6 position. This is 1,4-alpha-glucan branching enzyme GlgB from Prochlorococcus marinus subsp. pastoris (strain CCMP1986 / NIES-2087 / MED4).